A 638-amino-acid polypeptide reads, in one-letter code: 1-deoxy-D-xylulose-5-phosphate synthase (638 aa).

Thiamine diphosphate contacts are provided by residues histidine 71 and 112-114 (SHA). A Mg(2+)-binding site is contributed by aspartate 144. Thiamine diphosphate-binding positions include 145 to 146 (GA), asparagine 173, tyrosine 284, and glutamate 365. Residue asparagine 173 participates in Mg(2+) binding.

The protein belongs to the transketolase family. DXPS subfamily. As to quaternary structure, homodimer. Mg(2+) is required as a cofactor. It depends on thiamine diphosphate as a cofactor.

The catalysed reaction is D-glyceraldehyde 3-phosphate + pyruvate + H(+) = 1-deoxy-D-xylulose 5-phosphate + CO2. Its pathway is metabolic intermediate biosynthesis; 1-deoxy-D-xylulose 5-phosphate biosynthesis; 1-deoxy-D-xylulose 5-phosphate from D-glyceraldehyde 3-phosphate and pyruvate: step 1/1. Its function is as follows. Catalyzes the acyloin condensation reaction between C atoms 2 and 3 of pyruvate and glyceraldehyde 3-phosphate to yield 1-deoxy-D-xylulose-5-phosphate (DXP). The polypeptide is 1-deoxy-D-xylulose-5-phosphate synthase (Mycobacterium sp. (strain JLS)).